The following is a 293-amino-acid chain: Ribosomal protein L11 methyltransferase (293 aa).

S-adenosyl-L-methionine-binding residues include threonine 145, glycine 166, aspartate 188, and asparagine 230.

The protein belongs to the methyltransferase superfamily. PrmA family.

The protein resides in the cytoplasm. It carries out the reaction L-lysyl-[protein] + 3 S-adenosyl-L-methionine = N(6),N(6),N(6)-trimethyl-L-lysyl-[protein] + 3 S-adenosyl-L-homocysteine + 3 H(+). Its function is as follows. Methylates ribosomal protein L11. This is Ribosomal protein L11 methyltransferase from Shewanella sp. (strain ANA-3).